Reading from the N-terminus, the 311-residue chain is tRNA dimethylallyltransferase (311 aa).

Residue 16–23 (GATASGKS) coordinates ATP. Residue 18–23 (TASGKS) participates in substrate binding. Interaction with substrate tRNA regions lie at residues 41–44 (DSRQ) and 165–169 (QRLIR).

Belongs to the IPP transferase family. As to quaternary structure, monomer. Mg(2+) serves as cofactor.

It catalyses the reaction adenosine(37) in tRNA + dimethylallyl diphosphate = N(6)-dimethylallyladenosine(37) in tRNA + diphosphate. Functionally, catalyzes the transfer of a dimethylallyl group onto the adenine at position 37 in tRNAs that read codons beginning with uridine, leading to the formation of N6-(dimethylallyl)adenosine (i(6)A). This Chlorobium chlorochromatii (strain CaD3) protein is tRNA dimethylallyltransferase.